Consider the following 136-residue polypeptide: UPF0213 protein ASA_0550 (136 aa).

Positions 17–92 (GQWSIYLVRT…KQQSKAFKER (76 aa)) constitute a GIY-YIG domain.

It belongs to the UPF0213 family.

The polypeptide is UPF0213 protein ASA_0550 (Aeromonas salmonicida (strain A449)).